A 357-amino-acid polypeptide reads, in one-letter code: Putative electron transport protein YccM (357 aa).

The Cytoplasmic portion of the chain corresponds to 1–36 (MAENKRTRWQRRPGTTGGKLPWNDWRNATTWRKATQ). A helical transmembrane segment spans residues 37–54 (LLLLAMNIYIAITFWYWV). Topologically, residues 55-91 (RYYETASSTTFVARPGGIEGWLPIAGLMNLKYSLVTG) are periplasmic. The helical transmembrane segment at 92–114 (QLPSVHAAAMLLLVAFIVISLLL) threads the bilayer. Over 115-158 (KKAFCSWLCPVGTLSELIGDLGNKLFGRQCVLPRWLDIPLRGVK) the chain is Cytoplasmic. A helical membrane pass occupies residues 159–181 (YLLLSFFIYIALLMPAQAIHYFM). At 182–195 (LSPYSVVMDVKMLD) the chain is on the periplasmic side. The chain crosses the membrane as a helical span at residues 196-218 (FFRHMGTATLISVTVLLIASLFI). Residues 219–309 (RHAWCRYLCP…KPAANKKAFA (91 aa)) are Cytoplasmic-facing. 4Fe-4S ferredoxin-type domains lie at 242–270 (FKIR…VDKL) and 269–299 (KLIQ…FSLQ). [4Fe-4S] cluster is bound by residues C251, C254, C257, C261, C278, C281, C284, and C288. The chain crosses the membrane as a helical span at residues 310–332 (LSGWLMTLLVLGIMFAVIGYAMY). Residues 333–357 (AGVWQSPVPEELYRRLIPQAPMIGH) are Periplasmic-facing.

It is found in the cell inner membrane. This Escherichia coli (strain K12) protein is Putative electron transport protein YccM (yccM).